The sequence spans 213 residues: 2-C-methyl-D-erythritol 4-phosphate cytidylyltransferase (213 aa).

It belongs to the IspD/TarI cytidylyltransferase family. IspD subfamily.

The catalysed reaction is 2-C-methyl-D-erythritol 4-phosphate + CTP + H(+) = 4-CDP-2-C-methyl-D-erythritol + diphosphate. It functions in the pathway isoprenoid biosynthesis; isopentenyl diphosphate biosynthesis via DXP pathway; isopentenyl diphosphate from 1-deoxy-D-xylulose 5-phosphate: step 2/6. Its function is as follows. Catalyzes the formation of 4-diphosphocytidyl-2-C-methyl-D-erythritol from CTP and 2-C-methyl-D-erythritol 4-phosphate (MEP). This is 2-C-methyl-D-erythritol 4-phosphate cytidylyltransferase from Thermus thermophilus (strain ATCC BAA-163 / DSM 7039 / HB27).